The following is a 261-amino-acid chain: Thiazole synthase (261 aa).

The active-site Schiff-base intermediate with DXP is the Lys-102. 1-deoxy-D-xylulose 5-phosphate contacts are provided by residues Gly-163, 189–190, and 211–212; these read AG and NT.

This sequence belongs to the ThiG family. Homotetramer. Forms heterodimers with either ThiH or ThiS.

The protein localises to the cytoplasm. The catalysed reaction is [ThiS sulfur-carrier protein]-C-terminal-Gly-aminoethanethioate + 2-iminoacetate + 1-deoxy-D-xylulose 5-phosphate = [ThiS sulfur-carrier protein]-C-terminal Gly-Gly + 2-[(2R,5Z)-2-carboxy-4-methylthiazol-5(2H)-ylidene]ethyl phosphate + 2 H2O + H(+). Its pathway is cofactor biosynthesis; thiamine diphosphate biosynthesis. Functionally, catalyzes the rearrangement of 1-deoxy-D-xylulose 5-phosphate (DXP) to produce the thiazole phosphate moiety of thiamine. Sulfur is provided by the thiocarboxylate moiety of the carrier protein ThiS. In vitro, sulfur can be provided by H(2)S. This Acinetobacter baumannii (strain SDF) protein is Thiazole synthase.